Reading from the N-terminus, the 361-residue chain is Protein Wnt-2 (361 aa).

The N-terminal stretch at 1 to 27 (MNASVLGLCLSGPLVLLLAWLAPPVTS) is a signal peptide. Cystine bridges form between cysteine 77/cysteine 88, cysteine 128/cysteine 136, cysteine 138/cysteine 158, cysteine 207/cysteine 221, cysteine 209/cysteine 216, cysteine 279/cysteine 310, cysteine 295/cysteine 305, cysteine 309/cysteine 349, cysteine 325/cysteine 340, cysteine 327/cysteine 337, and cysteine 332/cysteine 333. A lipid anchor (O-palmitoleoyl serine; by PORCN) is attached at serine 213. A glycan (N-linked (GlcNAc...) asparagine) is linked at asparagine 296.

It belongs to the Wnt family. Palmitoleoylation is required for efficient binding to frizzled receptors. Depalmitoleoylation leads to Wnt signaling pathway inhibition.

The protein resides in the secreted. The protein localises to the extracellular space. It is found in the extracellular matrix. Its function is as follows. Ligand for members of the frizzled family of seven transmembrane receptors. Probable developmental protein. May be a signaling molecule which affects the development of discrete regions of tissues. Is likely to signal over only few cell diameters. The chain is Protein Wnt-2 (WNT2) from Ornithorhynchus anatinus (Duckbill platypus).